The primary structure comprises 206 residues: Ribosomal RNA large subunit methyltransferase E (206 aa).

5 residues coordinate S-adenosyl-L-methionine: G60, W62, D80, D96, and D121. The active-site Proton acceptor is the K161.

The protein belongs to the class I-like SAM-binding methyltransferase superfamily. RNA methyltransferase RlmE family.

It localises to the cytoplasm. The catalysed reaction is uridine(2552) in 23S rRNA + S-adenosyl-L-methionine = 2'-O-methyluridine(2552) in 23S rRNA + S-adenosyl-L-homocysteine + H(+). Functionally, specifically methylates the uridine in position 2552 of 23S rRNA at the 2'-O position of the ribose in the fully assembled 50S ribosomal subunit. The chain is Ribosomal RNA large subunit methyltransferase E from Nitrosomonas eutropha (strain DSM 101675 / C91 / Nm57).